We begin with the raw amino-acid sequence, 661 residues long: Kininogen-1 (661 aa).

An N-terminal signal peptide occupies residues 1-20 (MKLITTLLLCSGLLLTLTQG). A Cystatin kininogen-type 1 domain is found at 28–131 (CNDEAVFQAV…TQTCKIAPSK (104 aa)). Cystine bridges form between Cys-28–Cys-631, Cys-83–Cys-94, Cys-107–Cys-125, Cys-141–Cys-144, Cys-205–Cys-217, Cys-228–Cys-247, Cys-263–Cys-266, Cys-327–Cys-339, and Cys-350–Cys-369. Asn-82 is a glycosylation site (N-linked (GlcNAc...) asparagine). Residues 150–253 (TDSPDLEPVL…SQSCTLYSGD (104 aa)) form the Cystatin kininogen-type 2 domain. Asn-168 and Asn-204 each carry an N-linked (GlcNAc...) asparagine glycan. Asn-242 carries an N-linked (GlcNAc...) asparagine glycan. The region spanning 272–375 (VDSPELKEVL…TVKCQALDMT (104 aa)) is the Cystatin kininogen-type 3 domain. Ser-331 is modified (phosphoserine). Disordered stretches follow at residues 405-471 (YIAR…LGHG), 485-583 (DGDD…FQDS), and 626-661 (ATSP…DALS). 2 stretches are compositionally biased toward basic residues: residues 434–471 (KANK…LGHG) and 492–526 (TVGH…HGKH). Over residues 541-555 (TESLASSSEYSTTST) the composition is skewed to low complexity. The span at 650–661 (EFSDFDLLDALS) shows a compositional bias: acidic residues.

As to quaternary structure, isoform LMW interacts with CRISP3. In terms of processing, bradykinin is released from kininogen by plasma kallikrein. Phosphorylated by FAM20C in the extracellular medium. Post-translationally, bradykinin is inactivated by ACE, which removes the dipeptide Arg-Phe from its C-terminus. In terms of tissue distribution, plasma.

It is found in the secreted. It localises to the extracellular space. Functionally, kininogens are inhibitors of thiol proteases. HMW-kininogen plays an important role in blood coagulation by helping to position optimally prekallikrein and factor XI next to factor XII; HMW-kininogen inhibits the thrombin- and plasmin-induced aggregation of thrombocytes. LMW-kininogen inhibits the aggregation of thrombocytes. LMW-kininogen is in contrast to HMW-kininogen not involved in blood clotting. The active peptide bradykinin is a potent vasodilatator that is released from HMW-kininogen shows a variety of physiological effects: (A) influence in smooth muscle contraction, (B) induction of hypotension, (C) natriuresis and diuresis, (D) decrease in blood glucose level, (E) it is a mediator of inflammation and causes (E1) increase in vascular permeability, (E2) stimulation of nociceptors (4E3) release of other mediators of inflammation (e.g. prostaglandins), (F) it has a cardioprotective effect (directly via bradykinin action, indirectly via endothelium-derived relaxing factor action). The sequence is that of Kininogen-1 (Kng1) from Mus musculus (Mouse).